The primary structure comprises 263 residues: Nicotinamide riboside transporter PnuC (263 aa).

Residues 1–40 lie on the Cytoplasmic side of the membrane; that stretch reads MQYGMDSFGLRGIPHQVFIKKKEGKIMSLAWWKRELFGGW. The helical transmembrane segment at 41 to 61 threads the bilayer; sequence THFEAVWLLMFLGIQAVVFVF. A topological domain (periplasmic) is located at residue Asn-62. A helical transmembrane segment spans residues 63–83; the sequence is PDSWLASVAAVTGILCVVFVG. The Cytoplasmic portion of the chain corresponds to 84–86; the sequence is KGK. A helical membrane pass occupies residues 87–107; sequence ISNYLFGLISVSLYAYVSYTF. The Periplasmic portion of the chain corresponds to 108–109; that stretch reads KL. Residues 110–131 traverse the membrane as a helical segment; the sequence is YGEMMLNLLVYVPVQFVGFAMW. Beta-nicotinamide D-riboside is bound at residue Gln-124. Topologically, residues 132–155 are cytoplasmic; it reads RKHMALGETAETEEVKAKALTVRQ. Residues 156-177 form a helical membrane-spanning segment; the sequence is WLLVVAASVVGTSVYIEWLHHL. Topologically, residues 178–180 are periplasmic; that stretch reads GSA. The helical transmembrane segment at 181-201 threads the bilayer; it reads LPTLDGVTVVVSIVAQVLMIL. A beta-nicotinamide D-riboside-binding site is contributed by Gln-196. The Cytoplasmic portion of the chain corresponds to 202-205; the sequence is RYRE. The helical transmembrane segment at 206–226 threads the bilayer; it reads QWALWIVVNILTISLWAVAWF. Beta-nicotinamide D-riboside is bound by residues Trp-210 and Asn-214. Over 227–232 the chain is Periplasmic; it reads KNGETS. The helical transmembrane segment at 233 to 253 threads the bilayer; sequence LPLLLMYVMYLCNSVYGYINW. Position 242 (Tyr-242) interacts with beta-nicotinamide D-riboside. The Cytoplasmic segment spans residues 254-263; that stretch reads TKLVKRHSGQ.

This sequence belongs to the nicotinamide ribonucleoside (NR) uptake permease (TC 4.B.1) family. As to quaternary structure, homotrimer.

It is found in the cell inner membrane. Functionally, required for nicotinamide riboside transport across the inner membrane. The chain is Nicotinamide riboside transporter PnuC from Neisseria mucosa (strain ATCC 25996 / DSM 4631 / NCTC 10774 / M26).